The following is a 635-amino-acid chain: GDP-Man:Man(3)GlcNAc(2)-PP-Dol alpha-1,2-mannosyltransferase (635 aa).

Over 1 to 21 (MALQLDLPTLHDLRVVLNADF) the chain is Lumenal. The helical transmembrane segment at 22–42 (LAALAALLLLAVILVPLCSYI) threads the bilayer. Residues 43–231 (SLYAWSAILA…RLVDPKTWPR (189 aa)) lie on the Cytoplasmic side of the membrane. An intramembrane region (helical) is located at residues 232–252 (FTLMMQAAGSVWMAWHGISTL). At 253-481 (VPDVFVDTMG…MGVNAMWNEH (229 aa)) the chain is on the cytoplasmic side. An intramembrane region (helical) is located at residues 482-502 (FGIVVVEYMSAGLIPVVHNSG). Topologically, residues 503 to 635 (GPKCDIVVPY…GHRLTRGDFD (133 aa)) are cytoplasmic.

The protein belongs to the glycosyltransferase group 1 family.

Its subcellular location is the endoplasmic reticulum membrane. The catalysed reaction is an alpha-D-Man-(1-&gt;3)-[alpha-D-Man-(1-&gt;6)]-beta-D-Man-(1-&gt;4)-beta-D-GlcNAc-(1-&gt;4)-alpha-D-GlcNAc-diphospho-di-trans,poly-cis-dolichol + 2 GDP-alpha-D-mannose = an alpha-D-Man-(1-&gt;2)-alpha-D-Man-(1-&gt;2)-alpha-D-Man-(1-&gt;3)-[alpha-D-Man-(1-&gt;6)]-beta-D-Man-(1-&gt;4)-beta-D-GlcNAc-(1-&gt;4)-alpha-D-GlcNAc-diphospho-di-trans,poly-cis-dolichol + 2 GDP + 2 H(+). The protein operates within protein modification; protein glycosylation. In terms of biological role, GDP-Man:Man(3)GlcNAc(2)-PP-Dol alpha-1,2-mannosyltransferase that operates in the biosynthetic pathway of dolichol-linked oligosaccharides, the glycan precursors employed in protein asparagine (N)-glycosylation. The assembly of dolichol-linked oligosaccharides begins on the cytosolic side of the endoplasmic reticulum membrane and finishes in its lumen. The sequential addition of sugars to dolichol pyrophosphate produces dolichol-linked oligosaccharides containing fourteen sugars, including two GlcNAcs, nine mannoses and three glucoses. Once assembled, the oligosaccharide is transferred from the lipid to nascent proteins by oligosaccharyltransferases. Catalyzes, on the cytoplasmic face of the endoplasmic reticulum, the addition of the fourth and fifth mannose residues to the dolichol-linked oligosaccharide chain, to produce Man(5)GlcNAc(2)-PP-dolichol core oligosaccharide. This is GDP-Man:Man(3)GlcNAc(2)-PP-Dol alpha-1,2-mannosyltransferase (ALG11) from Yarrowia lipolytica (strain CLIB 122 / E 150) (Yeast).